We begin with the raw amino-acid sequence, 156 residues long: Small ribosomal subunit protein uS7 (156 aa).

The protein belongs to the universal ribosomal protein uS7 family. In terms of assembly, part of the 30S ribosomal subunit. Contacts proteins S9 and S11.

In terms of biological role, one of the primary rRNA binding proteins, it binds directly to 16S rRNA where it nucleates assembly of the head domain of the 30S subunit. Is located at the subunit interface close to the decoding center, probably blocks exit of the E-site tRNA. This Mycolicibacterium smegmatis (strain ATCC 700084 / mc(2)155) (Mycobacterium smegmatis) protein is Small ribosomal subunit protein uS7.